We begin with the raw amino-acid sequence, 182 residues long: MPVAALIREEIEIPENVNVEVNGSTVAVKSGAKELKRDLLYPGIEISTEDGKVVIECTFPRKAQTAIVGTYRSHIQNMITGVTDGFEYKLVIRYAHFPMKVSAKGNTVTIDNFLGEKYTRTAKIMDGVTVKVSGEEVIVSGANKEFVGQTAANIEQATKVKGRDTRIFQDGIYIVEKAGKVL.

This sequence belongs to the universal ribosomal protein uL6 family. Part of the 50S ribosomal subunit.

Functionally, this protein binds to the 23S rRNA, and is important in its secondary structure. It is located near the subunit interface in the base of the L7/L12 stalk, and near the tRNA binding site of the peptidyltransferase center. This Methanococcus maripaludis (strain C7 / ATCC BAA-1331) protein is Large ribosomal subunit protein uL6.